Consider the following 312-residue polypeptide: Dihydroorotate dehydrogenase B (NAD(+)), catalytic subunit (312 aa).

FMN is bound by residues Ser23 and 47-48 (KA). Residues Lys47 and 71 to 75 (NAIGL) each bind substrate. FMN is bound by residues Asn102 and Asn130. Asn130 contributes to the substrate binding site. Cys133 serves as the catalytic Nucleophile. FMN is bound by residues Lys168 and Ile194. 195–196 (NT) serves as a coordination point for substrate. FMN-binding positions include Gly220, 246 to 247 (GG), and 268 to 269 (GT).

The protein belongs to the dihydroorotate dehydrogenase family. Type 1 subfamily. In terms of assembly, heterotetramer of 2 PyrK and 2 PyrD type B subunits. FMN serves as cofactor.

It is found in the cytoplasm. The enzyme catalyses (S)-dihydroorotate + NAD(+) = orotate + NADH + H(+). It functions in the pathway pyrimidine metabolism; UMP biosynthesis via de novo pathway; orotate from (S)-dihydroorotate (NAD(+) route): step 1/1. Catalyzes the conversion of dihydroorotate to orotate with NAD(+) as electron acceptor. The sequence is that of Dihydroorotate dehydrogenase B (NAD(+)), catalytic subunit (pyrDB) from Enterococcus faecalis (strain ATCC 47077 / OG1RF).